The sequence spans 141 residues: MAIERTLSIIKPDAVAKNVIGQIYARFEAAGLKIVAARMIHLSRAEAEQFYAVHKERPFFKDLVDFMISGPVMVQALEGENAVLKNRELMGATDPKKAAPGTIRADFADSIDANAVHGSDAAETAQVEVAFFFPGLNIYSR.

Residues Lys11, Phe59, Arg87, Thr93, Arg104, and Asn114 each coordinate ATP. His117 (pros-phosphohistidine intermediate) is an active-site residue.

It belongs to the NDK family. As to quaternary structure, homotetramer. Mg(2+) serves as cofactor.

It localises to the cytoplasm. The catalysed reaction is a 2'-deoxyribonucleoside 5'-diphosphate + ATP = a 2'-deoxyribonucleoside 5'-triphosphate + ADP. The enzyme catalyses a ribonucleoside 5'-diphosphate + ATP = a ribonucleoside 5'-triphosphate + ADP. Functionally, major role in the synthesis of nucleoside triphosphates other than ATP. The ATP gamma phosphate is transferred to the NDP beta phosphate via a ping-pong mechanism, using a phosphorylated active-site intermediate. The chain is Nucleoside diphosphate kinase from Acidovorax ebreus (strain TPSY) (Diaphorobacter sp. (strain TPSY)).